Here is a 455-residue protein sequence, read N- to C-terminus: Bifunctional protein GlmU (455 aa).

Residues 1-230 (MVNKNAIILA…FDESMGVNDR (230 aa)) form a pyrophosphorylase region. UDP-N-acetyl-alpha-D-glucosamine contacts are provided by residues 9 to 12 (LAAG), lysine 23, glutamine 73, 78 to 79 (GT), 101 to 103 (SGD), glycine 140, glutamate 155, asparagine 170, and asparagine 228. Aspartate 103 contacts Mg(2+). Residue asparagine 228 coordinates Mg(2+). A linker region spans residues 231–251 (SALAKATKIMQKRINTQLMKD). The N-acetyltransferase stretch occupies residues 252–455 (GVTLVDPETA…KPGYAKKLPW (204 aa)). UDP-N-acetyl-alpha-D-glucosamine is bound by residues arginine 333 and lysine 351. Residue histidine 363 is the Proton acceptor of the active site. UDP-N-acetyl-alpha-D-glucosamine contacts are provided by tyrosine 366 and asparagine 377. Acetyl-CoA contacts are provided by residues 386–387 (NY), serine 405, alanine 423, and arginine 440.

In the N-terminal section; belongs to the N-acetylglucosamine-1-phosphate uridyltransferase family. This sequence in the C-terminal section; belongs to the transferase hexapeptide repeat family. In terms of assembly, homotrimer. Mg(2+) serves as cofactor.

It is found in the cytoplasm. The enzyme catalyses alpha-D-glucosamine 1-phosphate + acetyl-CoA = N-acetyl-alpha-D-glucosamine 1-phosphate + CoA + H(+). It carries out the reaction N-acetyl-alpha-D-glucosamine 1-phosphate + UTP + H(+) = UDP-N-acetyl-alpha-D-glucosamine + diphosphate. It functions in the pathway nucleotide-sugar biosynthesis; UDP-N-acetyl-alpha-D-glucosamine biosynthesis; N-acetyl-alpha-D-glucosamine 1-phosphate from alpha-D-glucosamine 6-phosphate (route II): step 2/2. The protein operates within nucleotide-sugar biosynthesis; UDP-N-acetyl-alpha-D-glucosamine biosynthesis; UDP-N-acetyl-alpha-D-glucosamine from N-acetyl-alpha-D-glucosamine 1-phosphate: step 1/1. Its pathway is bacterial outer membrane biogenesis; LPS lipid A biosynthesis. Functionally, catalyzes the last two sequential reactions in the de novo biosynthetic pathway for UDP-N-acetylglucosamine (UDP-GlcNAc). The C-terminal domain catalyzes the transfer of acetyl group from acetyl coenzyme A to glucosamine-1-phosphate (GlcN-1-P) to produce N-acetylglucosamine-1-phosphate (GlcNAc-1-P), which is converted into UDP-GlcNAc by the transfer of uridine 5-monophosphate (from uridine 5-triphosphate), a reaction catalyzed by the N-terminal domain. In Limosilactobacillus fermentum (strain NBRC 3956 / LMG 18251) (Lactobacillus fermentum), this protein is Bifunctional protein GlmU.